Here is a 167-residue protein sequence, read N- to C-terminus: Swarming motility protein SwrB (167 aa).

A disordered region spans residues 63–105; sequence IENKASSASQSDEESQKSGLQTSETYQERDPVQEAENLPEHIE. Over residues 88 to 105 the composition is skewed to basic and acidic residues; that stretch reads YQERDPVQEAENLPEHIE.

Its function is as follows. Required for swarming motility and for maximal sigma-D activity. This Bacillus subtilis (strain 168) protein is Swarming motility protein SwrB (swrB).